We begin with the raw amino-acid sequence, 319 residues long: Glutathione synthetase (319 aa).

Residues 125–311 form the ATP-grasp domain; that stretch reads EKLFATLFPQ…IGGLLMDAIE (187 aa). 151-208 contributes to the ATP binding site; that stretch reads FAEQQGDVILKPLDGMGGASIFRHRAGDPNLSVILETLTAHGTQQIMAQGYLPAIKDG. Positions 282 and 284 each coordinate Mg(2+).

The protein belongs to the prokaryotic GSH synthase family. Mg(2+) serves as cofactor. It depends on Mn(2+) as a cofactor.

It carries out the reaction gamma-L-glutamyl-L-cysteine + glycine + ATP = glutathione + ADP + phosphate + H(+). The protein operates within sulfur metabolism; glutathione biosynthesis; glutathione from L-cysteine and L-glutamate: step 2/2. In Pseudomonas syringae pv. tomato (strain ATCC BAA-871 / DC3000), this protein is Glutathione synthetase.